Consider the following 318-residue polypeptide: MELLSPPLRDIDLTGPDGSLCSFETADDFYDDPCFDSPDLRFFEDLDPRLVHMGALLKPEEHAHFPTAVHPGPGAREDEHVRAPSGHHQAGRCLLWACKACKRKTTNADRRKAATMRERRRLSKVNEAFETLKRCTSSNPNQRLPKVEILRNAIRYIEGLQALLRDQDAAPPGAAAFYAPGPLPPGRGSEHYSGDSDASSPRSNCSDGMMDYSGPPSGPRRQNGYDTAYYSEAARESRPGKSAAVSSLDCLSSIVERISTDSPAAPALLLADAPPESPPGPPEGASLSDTEQGTQTPSPDAAPQCPAGSNPNAIYQVL.

Met-1 participates in a covalent cross-link: Peptide (Met-Gly) (interchain with G-Cter in ubiquitin). N6-methyllysine; by EHMT2 is present on Lys-104. Positions 109–160 constitute a bHLH domain; that stretch reads DRRKAATMRERRRLSKVNEAFETLKRCTSSNPNQRLPKVEILRNAIRYIEGL. Disordered regions lie at residues 175–225 and 265–318; these read AAFY…QNGY and APAL…YQVL. Polar residues predominate over residues 196–206; it reads SDASSPRSNCS. Residues 265–274 are compositionally biased toward low complexity; it reads APALLLADAP. 2 stretches are compositionally biased toward polar residues: residues 287–298 and 307–318; these read LSDTEQGTQTPS and AGSNPNAIYQVL.

Interacts with SUV39H1. Efficient DNA binding requires dimerization with another bHLH protein. Seems to form active heterodimers with ITF-2. Interacts with DDX5. Interacts with CHD2. Interacts with TSC22D3 isoform 1 and isoform 4. Interacts with SETD3. Interacts with P-TEFB complex; promotes the transcriptional activity of MYOD1 through its CDK9-mediated phosphorylation. Interacts with CSRP3. Interacts with NUPR1. Acetylated by a complex containing EP300 and PCAF. The acetylation is essential to activate target genes. Conversely, its deacetylation by SIRT1 inhibits its function. In terms of processing, ubiquitinated on the N-terminus; which is required for proteasomal degradation. Post-translationally, phosphorylated by CDK9. This phosphorylation promotes its function in muscle differentiation. Methylation at Lys-104 by EHMT2/G9a inhibits myogenic activity.

It localises to the nucleus. Its function is as follows. Acts as a transcriptional activator that promotes transcription of muscle-specific target genes and plays a role in muscle differentiation. Together with MYF5 and MYOG, co-occupies muscle-specific gene promoter core region during myogenesis. Induces fibroblasts to differentiate into myoblasts. Interacts with and is inhibited by the twist protein. This interaction probably involves the basic domains of both proteins. The sequence is that of Myoblast determination protein 1 (Myod1) from Mus musculus (Mouse).